The chain runs to 2009 residues: Sodium channel protein type 1 subunit alpha (2009 aa).

Residues 1-128 (MEQTVLVPPG…KIAIKILVHS (128 aa)) lie on the Cytoplasmic side of the membrane. Residues 28-48 (RIAEEKAKNPKPDKKDDDENG) show a composition bias toward basic and acidic residues. The tract at residues 28-60 (RIAEEKAKNPKPDKKDDDENGPKPNSDLEAGKN) is disordered. The I repeat unit spans residues 110–454 (ILTPFNPLRK…QQMIEQLKKQ (345 aa)). The helical transmembrane segment at 129-146 (LFSMLIMCTILTNCVFMT) threads the bilayer. The Extracellular segment spans residues 147–152 (MSNPPD). A helical transmembrane segment spans residues 153 to 177 (WTKNVEYTFTGIYTFESLIKIIARG). Residues 178 to 188 (FCLEDFTFLRD) are Cytoplasmic-facing. A helical membrane pass occupies residues 189–205 (PWNWLDFTVITFAYVTE). At 206–213 (FVDLGNVS) the chain is on the extracellular side. N-linked (GlcNAc...) asparagine glycosylation occurs at N211. A helical membrane pass occupies residues 214-235 (ALRTFRVLRALKTISVIPGLKT). Topologically, residues 236 to 245 (IVGALIQSVK) are cytoplasmic. Residues 246-269 (KLSDVMILTVFCLSVFALIGLQLF) traverse the membrane as a helical segment. Residues 270–369 (MGNLRNKCIQ…YGYTSFDTFS (100 aa)) are Extracellular-facing. 2 disulfide bridges follow: C277-C345 and C336-C351. Residues N284, N295, N301, N306, and N338 are each glycosylated (N-linked (GlcNAc...) asparagine). Residues 370–384 (WAFLSLFRLMTQDFW) constitute an intramembrane region (pore-forming). Residues 385–397 (ENLYQLTLRAAGK) are Extracellular-facing. A helical transmembrane segment spans residues 398-423 (TYMIFFVLVIFLGSFYLINLILAVVA). The Cytoplasmic segment spans residues 424–768 (MAYEEQNQAT…HVVNLVVMDP (345 aa)). A disordered region spans residues 455-529 (QEAAQQAATA…FQKSESEDSI (75 aa)). Positions 456 to 466 (EAAQQAATATA) are enriched in low complexity. S470 carries the phosphoserine modification. A compositionally biased stretch (low complexity) spans 479-492 (LSDSSSEASKLSSK). Basic residues predominate over residues 495–506 (KERRNRRKKRKQ). Positions 520–529 (FQKSESEDSI) are enriched in basic and acidic residues. Phosphoserine occurs at positions 523, 525, 550, 551, 607, and 730. The disordered stretch occupies residues 584 to 627 (VGSENDFADDEHSTFEDNESRRDSLFVPRRHGERRNSNLSQTSR). The segment covering 593–607 (DEHSTFEDNESRRDS) has biased composition (basic and acidic residues). The II repeat unit spans residues 750–1022 (CSPYWLKVKH…QIAVDRMHKG (273 aa)). A helical membrane pass occupies residues 769–787 (FVDLAITICIVLNTLFMAM). Residues 788–797 (EHYPMTDHFN) are Extracellular-facing. Residues 798–820 (NVLTVGNLVFTGIFTAEMFLKII) form a helical membrane-spanning segment. Residues 821–830 (AMDPYYYFQE) are Cytoplasmic-facing. A helical transmembrane segment spans residues 831 to 849 (GWNIFDGFIVTLSLVELGL). Residues 850-854 (ANVEG) are Extracellular-facing. The chain crosses the membrane as a helical span at residues 855–874 (LSVLRSFRLLRVFKLAKSWP). Topologically, residues 875–891 (TLNMLIKIIGNSVGALG) are cytoplasmic. A helical membrane pass occupies residues 892 to 912 (NLTLVLAIIVFIFAVVGMQLF). At 913-938 (GKSYKDCVCKIASDCQLPRWHMNDFF) the chain is on the extracellular side. C921 and C927 are oxidised to a cystine. Residues 939-952 (HSFLIVFRVLCGEW) constitute an intramembrane region (pore-forming). Over 953–965 (IETMWDCMEVAGQ) the chain is Extracellular. An intrachain disulfide couples C959 to C968. Residues 966 to 992 (AMCLTVFMMVMVIGNLVVLNLFLALLL) form a helical membrane-spanning segment. The Cytoplasmic segment spans residues 993-1218 (SSFSADNLAA…RTCFRIVEHN (226 aa)). The interval 1129 to 1163 (TEDFSSESDLEESKEKLNESSSSSEGSTVDIGAPV) is disordered. An III repeat occupies 1200–1514 (RGKQWWNLRR…KKYYNAMKKL (315 aa)). The helical transmembrane segment at 1219–1237 (WFETFIVFMILLSSGALAF) threads the bilayer. Over 1238 to 1250 (EDIYIDQRKTIKT) the chain is Extracellular. The helical transmembrane segment at 1251–1276 (MLEYADKVFTYIFILEMLLKWVAYGY) threads the bilayer. The Cytoplasmic portion of the chain corresponds to 1277-1278 (QT). The chain crosses the membrane as a helical span at residues 1279–1304 (YFTNAWCWLDFLIVDVSLVSLTANAL). Over 1305 to 1313 (GYSELGAIK) the chain is Extracellular. Residues 1314 to 1332 (SLRTLRALRPLRALSRFEG) traverse the membrane as a helical segment. Topologically, residues 1333-1345 (MRVVVNALLGAIP) are cytoplasmic. Residues 1346–1369 (SIMNVLLVCLIFWLIFSIMGVNLF) traverse the membrane as a helical segment. Over 1370 to 1415 (AGKFYHCINTTTGDRFDIEDVNNHTDCLKLIERNETARWKNVKVNF) the chain is Extracellular. C1376 and C1396 form a disulfide bridge. 3 N-linked (GlcNAc...) asparagine glycosylation sites follow: N1378, N1392, and N1403. The segment at residues 1416-1433 (DNVGFGYLSLLQVATFKG) is an intramembrane region (pore-forming). Over 1434-1457 (WMDIMYAAVDSRNVELQPKYEESL) the chain is Extracellular. A helical transmembrane segment spans residues 1458 to 1483 (YMYLYFVIFIIFGSFFTLNLFIGVII). At 1484–1541 (DNFNQQKKKFGGQDIFMTEEQKKYYNAMKKLGSKKPQKPIPRPGNKFQGMVFDFVTRQ) the chain is on the cytoplasmic side. S1516 carries the post-translational modification Phosphoserine; by PKC. The IV repeat unit spans residues 1523 to 1821 (IPRPGNKFQG…WEKFDPDATQ (299 aa)). A helical transmembrane segment spans residues 1542-1560 (VFDISIMILICLNMVTMMV). The Extracellular segment spans residues 1561–1571 (ETDDQSEYVTT). An S1-S2 loop of repeat IV region spans residues 1561-1571 (ETDDQSEYVTT). A helical transmembrane segment spans residues 1572-1593 (ILSRINLVFIVLFTGECVLKLI). Topologically, residues 1594 to 1601 (SLRHYYFT) are cytoplasmic. Residues 1602–1623 (IGWNIFDFVVVILSIVGMFLAE) traverse the membrane as a helical segment. The interval 1619 to 1636 (MFLAELIEKYFVSPTLFR) is S3b-S4 loop of repeat IV. The Extracellular portion of the chain corresponds to 1624-1636 (LIEKYFVSPTLFR). A helical membrane pass occupies residues 1637 to 1655 (VIRLARIGRILRLIKGAKG). The Cytoplasmic segment spans residues 1656–1665 (IRTLLFALMM). A helical membrane pass occupies residues 1666–1688 (SLPALFNIGLLLFLVMFIYAIFG). The Extracellular portion of the chain corresponds to 1689–1711 (MSNFAYVKREVGIDDMFNFETFG). The pore-forming intramembrane region spans 1712 to 1726 (NSMICLFQITTSAGW). Residues 1727 to 1759 (DGLLAPILNSKPPDCDPNKVNPGSSVKGDCGNP) lie on the Extracellular side of the membrane. The cysteines at positions 1741 and 1756 are disulfide-linked. The chain crosses the membrane as a helical span at residues 1760-1788 (SVGIFFFVSYIIISFLVVVNMYIAVILEN). Topologically, residues 1789 to 2009 (FSVATEESAE…EGKDEKAKGK (221 aa)) are cytoplasmic. The region spanning 1915 to 1944 (EEVSAVIIQRAYRRHLLKRTVKQASFTYNK) is the IQ domain. A disordered region spans residues 1986 to 2009 (YDRVTKPIVEKHEQEGKDEKAKGK). Residues 1988 to 2009 (RVTKPIVEKHEQEGKDEKAKGK) show a composition bias toward basic and acidic residues.

Belongs to the sodium channel (TC 1.A.1.10) family. Nav1.1/SCN1A subfamily. The Nav1.1 voltage-gated sodium channel consists of an ion-conducting alpha subunit SCN1A which is functional on its own regulated by one or more beta-1 (SCN1B), beta-2 (SCN2B), beta-3 (SCN3B) and beta-4 (SCN4B) subunits. SCN1B and SCN3B are non-covalently associated with SCN1A. SCN2B and SCN4B are disulfide-linked to SCN1A. SCN1B regulates both the expression at the plasma membrane and the voltage dependence of Nav1.1 inactivation. SCN3B and SCN4B reduce Nav1.1 conductance. Probably interacts with TMEM233; modulates the gating properties of NaV1.1. Interacts with FGF13; regulates the steady-state inactivation of Nav.1.1. Post-translationally, phosphorylation at Ser-1516 by PKC in a highly conserved cytoplasmic loop slows inactivation of the sodium channel and reduces peak sodium currents.

The protein localises to the cell membrane. The catalysed reaction is Na(+)(in) = Na(+)(out). Its activity is regulated as follows. Activated by the spider toxins Hm1a and Hm1b (H.maculata, AC P60992 and AC P0DOC5) eliciting acute pain and mechanical allodynia. Inhibited by the conotoxin GVIIJ. Inhibited by the spider beta/delta-theraphotoxin-Pre1a. Pore-forming subunit of Nav1.1, a voltage-gated sodium (Nav) channel that directly mediates the depolarizing phase of action potentials in excitable membranes. Navs, also called VGSCs (voltage-gated sodium channels) or VDSCs (voltage-dependent sodium channels), operate by switching between closed and open conformations depending on the voltage difference across the membrane. In the open conformation they allow Na(+) ions to selectively pass through the pore, along their electrochemical gradient. The influx of Na(+) ions provokes membrane depolarization, initiating the propagation of electrical signals throughout cells and tissues. By regulating the excitability of neurons, ensures that they respond appropriately to synaptic inputs, maintaining the balance between excitation and inhibition in brain neural circuits. Nav1.1 plays a role in controlling the excitability and action potential propagation from somatosensory neurons, thereby contributing to the sensory perception of mechanically-induced pain. The chain is Sodium channel protein type 1 subunit alpha from Homo sapiens (Human).